The chain runs to 220 residues: Phosphatidylserine decarboxylase proenzyme (220 aa).

S188 acts as the Schiff-base intermediate with substrate; via pyruvic acid in catalysis. S188 carries the post-translational modification Pyruvic acid (Ser); by autocatalysis.

This sequence belongs to the phosphatidylserine decarboxylase family. PSD-A subfamily. As to quaternary structure, heterodimer of a large membrane-associated beta subunit and a small pyruvoyl-containing alpha subunit. Requires pyruvate as cofactor. Is synthesized initially as an inactive proenzyme. Formation of the active enzyme involves a self-maturation process in which the active site pyruvoyl group is generated from an internal serine residue via an autocatalytic post-translational modification. Two non-identical subunits are generated from the proenzyme in this reaction, and the pyruvate is formed at the N-terminus of the alpha chain, which is derived from the carboxyl end of the proenzyme. The post-translation cleavage follows an unusual pathway, termed non-hydrolytic serinolysis, in which the side chain hydroxyl group of the serine supplies its oxygen atom to form the C-terminus of the beta chain, while the remainder of the serine residue undergoes an oxidative deamination to produce ammonia and the pyruvoyl prosthetic group on the alpha chain.

The protein resides in the cell membrane. It carries out the reaction a 1,2-diacyl-sn-glycero-3-phospho-L-serine + H(+) = a 1,2-diacyl-sn-glycero-3-phosphoethanolamine + CO2. It participates in phospholipid metabolism; phosphatidylethanolamine biosynthesis; phosphatidylethanolamine from CDP-diacylglycerol: step 2/2. Functionally, catalyzes the formation of phosphatidylethanolamine (PtdEtn) from phosphatidylserine (PtdSer). This is Phosphatidylserine decarboxylase proenzyme from Parabacteroides distasonis (strain ATCC 8503 / DSM 20701 / CIP 104284 / JCM 5825 / NCTC 11152).